The chain runs to 96 residues: Cytochrome c2 iso-2 (96 aa).

The heme c site is built by cysteine 10, cysteine 13, histidine 14, and methionine 75.

The protein belongs to the cytochrome c family. Binds 1 heme c group covalently per subunit.

In terms of biological role, cytochrome c2 is found mainly in purple, non-sulfur, photosynthetic bacteria where it functions as the electron donor to the oxidized bacteriochlorophyll in the photophosphorylation pathway. However, it may also have a role in the respiratory chain and is found in some non-photosynthetic bacteria. The polypeptide is Cytochrome c2 iso-2 (Magnetospirillum fulvum (Rhodospirillum fulvum)).